Here is a 1026-residue protein sequence, read N- to C-terminus: MKFFALFIYRPVATTLLTLAIAISGVISFSLLPVSPLPQVDYPVISISASLPGADPETMASSVATPLERALGRIAGVNEMTSMSSLGSTRVILQFDLDRDINGAARDVQAAINAAQSLLPTGMPSRPSYRKVNPSDAPIMILTLTSDTYSQGQLYDFASTQLAQKIAQTEGVGDVSVGGSSLPAVRVELNPSALFNQGISLDAVRQTISNANVRRPQGSVENQQQRWQIQANDELKTAEVYRPLIIHYNNGSAVRLSDVAEVNDSVQDVRNAGMTNAKPAIILTISRAPDANIIETVDRIRAELPTLQNNIPASIQLNIAQDRSPTIRASLAEVEQSLVIAIGLVILVVFIFLRSGRATLIPAVAVPVSLIGSFTAMYLCGFSLNNLSLMALTIATGFVVDDAIVVLENISRHIEAGMKPINAALVGVREVGFTVLSMSVSLVAVFIPLLLMEGLPGRLFREFAVTLSVSIGLSLIISLTLTPMMCAYLLRHQPPRSQRRIRGFGKMLLALQKGYGRSLSWVLGHSRWVLAVFLATIALNVWLYVSIPKTFFPEQDTGRLMGFIQADQSISFQAMRVKLEDFMKIVREDPDVDNVTGFTGGSRTNSGSMFISLKPLSVRSDDAQKVIARLRAKLAKEPGASLFLMAVQDIRVGGRQANASYQYTLMADDLAALREWEPKIRTALAALPELADVNSDQQDKGSEMDLVYDRETMARLGISVSDANNLLNNAFGQRQISTIYQPLNQYKVVMEVAPPYTQDVSSLDKMFVINSDGKAIPLSYFASWRPANAPLSVNHQGLSAASTISFNLPDGGSLSDATAGIERTMTALGVPATVRGAFAGTAQVFQETLKSQLLLIAAAIATVYIVLGILYESYIHPLTILSTLPSAGVGALLALELFGAPFSLIALIGIMLLIGIVKKNAIMMVDFALDAQRNGGISAHDAIFQACLLRFRPIMMTTLAALFGALPLVLTHGDGAELRQPLGITIVGGLIVSQLLTLYTTPVVYLYFDRLQMKFRRGKKLDPLPQ.

Helical transmembrane passes span 12–32 (VATTLLTLAIAISGVISFSLL), 333–353 (EVEQSLVIAIGLVILVVFIFL), 360–380 (LIPAVAVPVSLIGSFTAMYLC), 387–407 (LSLMALTIATGFVVDDAIVVL), 431–451 (VGFTVLSMSVSLVAVFIPLLL), 463–483 (FAVTLSVSIGLSLIISLTLTP), 528–548 (WVLAVFLATIALNVWLYVSIP), 853–873 (LLLIAAAIATVYIVLGILYES), 897–917 (LFGAPFSLIALIGIMLLIGIV), 953–973 (PIMMTTLAALFGALPLVLTHG), and 984–1004 (ITIVGGLIVSQLLTLYTTPVV).

Belongs to the resistance-nodulation-cell division (RND) (TC 2.A.6) family. MdtC subfamily. Part of a tripartite efflux system composed of MdtA, MdtB and MdtC. MdtC forms a heteromultimer with MdtB.

Its subcellular location is the cell inner membrane. The protein is Multidrug resistance protein MdtC of Serratia proteamaculans (strain 568).